A 77-amino-acid chain; its full sequence is Sec-independent protein translocase protein TatA (77 aa).

Residues methionine 1–glycine 21 traverse the membrane as a helical segment. Residues lysine 40–valine 77 form a disordered region. The span at isoleucine 65–valine 77 shows a compositional bias: basic and acidic residues.

Belongs to the TatA/E family. As to quaternary structure, the Tat system comprises two distinct complexes: a TatABC complex, containing multiple copies of TatA, TatB and TatC subunits, and a separate TatA complex, containing only TatA subunits. Substrates initially bind to the TatABC complex, which probably triggers association of the separate TatA complex to form the active translocon.

The protein localises to the cell inner membrane. Part of the twin-arginine translocation (Tat) system that transports large folded proteins containing a characteristic twin-arginine motif in their signal peptide across membranes. TatA could form the protein-conducting channel of the Tat system. The sequence is that of Sec-independent protein translocase protein TatA from Nitrosomonas eutropha (strain DSM 101675 / C91 / Nm57).